The chain runs to 274 residues: 4-diphosphocytidyl-2-C-methyl-D-erythritol kinase (274 aa).

Lys-10 is a catalytic residue. 101-111 lines the ATP pocket; the sequence is PTQAGLGGGSA. Asp-143 is an active-site residue.

This sequence belongs to the GHMP kinase family. IspE subfamily.

The catalysed reaction is 4-CDP-2-C-methyl-D-erythritol + ATP = 4-CDP-2-C-methyl-D-erythritol 2-phosphate + ADP + H(+). Its pathway is isoprenoid biosynthesis; isopentenyl diphosphate biosynthesis via DXP pathway; isopentenyl diphosphate from 1-deoxy-D-xylulose 5-phosphate: step 3/6. Its function is as follows. Catalyzes the phosphorylation of the position 2 hydroxy group of 4-diphosphocytidyl-2C-methyl-D-erythritol. This is 4-diphosphocytidyl-2-C-methyl-D-erythritol kinase from Helicobacter pylori (strain HPAG1).